Consider the following 144-residue polypeptide: Transcriptional regulator MraZ (144 aa).

SpoVT-AbrB domains follow at residues 5-47 and 76-119; these read EYDH…TLDE and AVEV…DRET.

It belongs to the MraZ family. In terms of assembly, forms oligomers.

Its subcellular location is the cytoplasm. It is found in the nucleoid. This chain is Transcriptional regulator MraZ, found in Staphylococcus aureus.